The primary structure comprises 511 residues: Centrosomal protein CCDC61 (511 aa).

At M1 the chain carries N-acetylmethionine. Residues 1-143 form a head domain region; the sequence is MDQPAGLQVD…PLPLPYQGKP (143 aa). 2 coiled-coil regions span residues 176 to 203 and 246 to 273; these read IWHLREQVTRLTSEKRELEAQLGRSREE and SRRLAKELEEVKASERNLRARLKTLNSE. At T283 the chain carries Phosphothreonine. 2 disordered regions span residues 284 to 413 and 429 to 476; these read LPPV…DSFR and SHSV…GGWV. The segment covering 290–302 has biased composition (basic and acidic residues); it reads REGRASSSRERST. Phosphoserine is present on residues S330 and S332. The segment covering 360–369 has biased composition (low complexity); it reads KQQQQQRNRM. 2 positions are modified to phosphoserine: S371 and S374. Positions 433–442 are enriched in basic residues; the sequence is SRSRRCRGRG. Position 446 is a phosphoserine (S446). Over residues 449-458 the composition is skewed to polar residues; the sequence is PWSRSKTKST. Phosphoserine is present on S472.

The protein belongs to the CCDC61 family. In terms of assembly, forms homodimers (via head domain). Interacts with CEP170. Interacts with PCM1 and CEP131. Binds tubulin.

It localises to the cytoplasm. It is found in the cytoskeleton. The protein localises to the microtubule organizing center. The protein resides in the centrosome. Its subcellular location is the centriolar satellite. It localises to the cilium basal body. In terms of biological role, microtubule-binding centrosomal protein required for centriole cohesion, independently of the centrosome-associated protein/CEP250 and rootletin/CROCC linker. In interphase, required for anchoring microtubule at the mother centriole subdistal appendages and for centrosome positioning. During mitosis, may be involved in spindle assembly and chromatin alignment by regulating the organization of spindle microtubules into a symmetrical structure. Plays a non-essential role in ciliogenesis. In Mus musculus (Mouse), this protein is Centrosomal protein CCDC61.